Here is a 65-residue protein sequence, read N- to C-terminus: MPKMKTNRGAAKRFKKTGSGRFKCKHNHLRHILTKKSSKRKRKLGPKFMVSAADHKRVVACLPYA.

It belongs to the bacterial ribosomal protein bL35 family.

This Aeromonas salmonicida (strain A449) protein is Large ribosomal subunit protein bL35.